Consider the following 271-residue polypeptide: Phosphatidylinositol transfer protein beta isoform (271 aa).

Lys-215 carries the post-translational modification N6-acetyllysine. The residue at position 262 (Ser-262) is a Phosphoserine.

The protein belongs to the PtdIns transfer protein family. PI transfer class I subfamily. Constitutive phosphorylation of Ser-262 has no effect on phospholipid transfer activity but is required for Golgi targeting. As to expression, widely expressed in various tissues including brain.

The protein localises to the golgi apparatus. Its subcellular location is the golgi apparatus membrane. It localises to the endoplasmic reticulum membrane. It catalyses the reaction a 1,2-diacyl-sn-glycero-3-phosphocholine(in) = a 1,2-diacyl-sn-glycero-3-phosphocholine(out). It carries out the reaction a 1,2-diacyl-sn-glycero-3-phospho-(1D-myo-inositol)(in) = a 1,2-diacyl-sn-glycero-3-phospho-(1D-myo-inositol)(out). The catalysed reaction is an N-(acyl)-sphingosylphosphocholine(in) = an N-(acyl)-sphingosylphosphocholine(out). With respect to regulation, phosphatidylinositol transfer activity is inhibited by N-ethylmaleimide. Functionally, catalyzes the transfer of phosphatidylinositol and phosphatidylcholine between membranes. Also catalyzes the transfer of sphingomyelin. Required for COPI-mediated retrograde transport from the Golgi to the endoplasmic reticulum; phosphatidylinositol and phosphatidylcholine transfer activity is essential for this function. This chain is Phosphatidylinositol transfer protein beta isoform (PITPNB), found in Homo sapiens (Human).